We begin with the raw amino-acid sequence, 447 residues long: Methylenetetrahydrofolate--tRNA-(uracil-5-)-methyltransferase TrmFO (447 aa).

Residue 13-18 (GAGLAG) coordinates FAD.

Belongs to the MnmG family. TrmFO subfamily. It depends on FAD as a cofactor.

It localises to the cytoplasm. The catalysed reaction is uridine(54) in tRNA + (6R)-5,10-methylene-5,6,7,8-tetrahydrofolate + NADH + H(+) = 5-methyluridine(54) in tRNA + (6S)-5,6,7,8-tetrahydrofolate + NAD(+). It catalyses the reaction uridine(54) in tRNA + (6R)-5,10-methylene-5,6,7,8-tetrahydrofolate + NADPH + H(+) = 5-methyluridine(54) in tRNA + (6S)-5,6,7,8-tetrahydrofolate + NADP(+). Its function is as follows. Catalyzes the folate-dependent formation of 5-methyl-uridine at position 54 (M-5-U54) in all tRNAs. In Streptococcus thermophilus (strain CNRZ 1066), this protein is Methylenetetrahydrofolate--tRNA-(uracil-5-)-methyltransferase TrmFO.